The chain runs to 449 residues: Asparagine--tRNA ligase (449 aa).

Belongs to the class-II aminoacyl-tRNA synthetase family. In terms of assembly, homodimer.

It is found in the cytoplasm. It carries out the reaction tRNA(Asn) + L-asparagine + ATP = L-asparaginyl-tRNA(Asn) + AMP + diphosphate + H(+). This is Asparagine--tRNA ligase from Mesomycoplasma hyopneumoniae (strain J / ATCC 25934 / NCTC 10110) (Mycoplasma hyopneumoniae).